Consider the following 532-residue polypeptide: Ankyrin repeat-containing protein At2g01680 (532 aa).

ANK repeat units follow at residues 9–38 (LTHQ…GDEL), 58–89 (AGET…TVKI), 93–122 (SDMN…ELCR), 127–156 (SNTS…SCAM), 161–190 (NGKT…AIVG), 195–224 (KGQT…TILN), and 229–259 (KGNT…EVNA). 4 helical membrane passes run 354-374 (ITVV…NLPG), 396-416 (VFCL…VVQI), 436-456 (LMWA…FAVV), and 467-487 (ITLL…YFVF).

It localises to the membrane. The polypeptide is Ankyrin repeat-containing protein At2g01680 (Arabidopsis thaliana (Mouse-ear cress)).